A 538-amino-acid polypeptide reads, in one-letter code: Nucleolar protein 12 (538 aa).

Disordered stretches follow at residues 1 to 25 (MGKKSKAQSDNVSQPGKTDVTLPFL), 41 to 203 (KSAG…KSNR), 336 to 378 (ETDP…ASTR), 433 to 455 (AKKLPKKRDGPETGSHGKALGEG), and 476 to 538 (KAEG…KMAK). Residues 63–92 (PEDDVEKEEDDEEISELEEDLQSEDEDMQD) show a composition bias toward acidic residues. The stretch at 64–156 (EDDVEKEEDD…KAKRQKVEEG (93 aa)) forms a coiled coil. 3 stretches are compositionally biased toward basic and acidic residues: residues 127–144 (TYMRRIAKEEQKEQEKRR), 151–173 (QKVEEGGKDSDPVSDKSKDGRDE), and 182–202 (TVPRHETQSGDPESKELEKSN). 2 RRM domains span residues 203–315 (RTVF…SVAH) and 323–435 (RCVF…RAKK). The span at 502-521 (IKIKTKSRGSKGKPKNRSAK) shows a compositional bias: basic residues.

It belongs to the RRM RBM34 family.

It localises to the nucleus. The protein resides in the nucleolus. Functionally, involved in pre-25S rRNA processing. The sequence is that of Nucleolar protein 12 (nop12) from Aspergillus fumigatus (strain ATCC MYA-4609 / CBS 101355 / FGSC A1100 / Af293) (Neosartorya fumigata).